Consider the following 466-residue polypeptide: Asparagine--tRNA ligase (466 aa).

This sequence belongs to the class-II aminoacyl-tRNA synthetase family. In terms of assembly, homodimer.

The protein localises to the cytoplasm. It catalyses the reaction tRNA(Asn) + L-asparagine + ATP = L-asparaginyl-tRNA(Asn) + AMP + diphosphate + H(+). The polypeptide is Asparagine--tRNA ligase (Escherichia coli O157:H7).